A 700-amino-acid polypeptide reads, in one-letter code: Polyribonucleotide nucleotidyltransferase (700 aa).

Mg(2+) is bound by residues aspartate 485 and aspartate 491. The region spanning 552–611 is the KH domain; it reads PRITVIKINPEKIRDVIGKGGAVIRALTEETGTTIELEDDGTVKIASSNGEATKEAIRRI. Residues 621 to 689 form the S1 motif domain; it reads GRIYNGKVIR…RQGRVRLSIK (69 aa).

The protein belongs to the polyribonucleotide nucleotidyltransferase family. Component of the RNA degradosome, which is a multiprotein complex involved in RNA processing and mRNA degradation. Mg(2+) is required as a cofactor.

Its subcellular location is the cytoplasm. The catalysed reaction is RNA(n+1) + phosphate = RNA(n) + a ribonucleoside 5'-diphosphate. In terms of biological role, involved in mRNA degradation. Catalyzes the phosphorolysis of single-stranded polyribonucleotides processively in the 3'- to 5'-direction. This Shewanella baltica (strain OS185) protein is Polyribonucleotide nucleotidyltransferase.